A 371-amino-acid polypeptide reads, in one-letter code: Beta-1,3-galactosyltransferase 4 (371 aa).

At 1–4 (MPLS) the chain is on the cytoplasmic side. Residues 5 to 25 (LFRRLLLAVLLLVIIWTLFGP) traverse the membrane as a helical; Signal-anchor for type II membrane protein segment. The Lumenal segment spans residues 26–371 (SGLGEELLSL…RCRFIAWLNS (346 aa)). A glycan (N-linked (GlcNAc...) asparagine) is linked at Asn143. Positions 187-208 (GGPSEQWQKGKEPQEETTAVHK) are disordered. Positions 194 to 207 (QKGKEPQEETTAVH) are enriched in basic and acidic residues.

It belongs to the glycosyltransferase 31 family. Highly expressed in thymus, spleen, kidney and testis and, to a lesser extent, in brain and liver.

It is found in the golgi apparatus membrane. The catalysed reaction is a ganglioside GM2 (d18:1(4E)) + UDP-alpha-D-galactose = a ganglioside GM1 (d18:1(4E)) + UDP + H(+). It catalyses the reaction a ganglioside GM2 + UDP-alpha-D-galactose = a ganglioside GM1 + UDP + H(+). It carries out the reaction a ganglioside GD2 (d18:1(4E)) + UDP-alpha-D-galactose = a ganglioside GD1b (d18:1(4E)) + UDP + H(+). The enzyme catalyses a ganglioside GA2 (d18:1(4E)) + UDP-alpha-D-galactose = a ganglioside GA1 (d18:1(4E)) + UDP + H(+). Its pathway is protein modification; protein glycosylation. Functionally, involved in GM1/GD1B/GA1 ganglioside biosynthesis. The chain is Beta-1,3-galactosyltransferase 4 (B3galt4) from Rattus norvegicus (Rat).